A 498-amino-acid chain; its full sequence is AP2-like ethylene-responsive transcription factor AIL7 (498 aa).

Residues Thr186–Asn195 are compositionally biased toward polar residues. The disordered stretch occupies residues Thr186–Lys220. The span at Ser209–Lys220 shows a compositional bias: basic and acidic residues. DNA-binding regions (AP2/ERF) lie at residues Ile231–Pro297 and Ile333–Glu391. Low complexity predominate over residues Glu422–Ser451. Residues Glu422–Ile452 form a disordered region.

Belongs to the AP2/ERF transcription factor family. AP2 subfamily. In terms of assembly, interacts with HDG2, and possibly with HDG3, HDG7, ANL2, ATML1 and PDF2. In terms of tissue distribution, expressed in roots, seedlings, inflorescence, and siliques. Also detected at low levels in leaves.

Its subcellular location is the nucleus. Probably acts as a transcriptional activator. Binds to the GCC-box pathogenesis-related promoter element. May be involved in the regulation of gene expression by stress factors and by components of stress signal transduction pathways. This chain is AP2-like ethylene-responsive transcription factor AIL7, found in Arabidopsis thaliana (Mouse-ear cress).